Reading from the N-terminus, the 500-residue chain is Lysine--tRNA ligase (500 aa).

Positions 410 and 417 each coordinate Mg(2+).

The protein belongs to the class-II aminoacyl-tRNA synthetase family. Homodimer. Mg(2+) serves as cofactor.

The protein localises to the cytoplasm. It carries out the reaction tRNA(Lys) + L-lysine + ATP = L-lysyl-tRNA(Lys) + AMP + diphosphate. The chain is Lysine--tRNA ligase from Shewanella oneidensis (strain ATCC 700550 / JCM 31522 / CIP 106686 / LMG 19005 / NCIMB 14063 / MR-1).